We begin with the raw amino-acid sequence, 287 residues long: Cuticle collagen 38 (287 aa).

Positions Met1–Gly19 are cleaved as a signal peptide. A disordered region spans residues Gln95–His287. Over residues Pro98–Leu107 the composition is skewed to pro residues. Collagen-like domains follow at residues Gln145 to Gly200 and Gly215 to Pro273. A compositionally biased stretch (low complexity) spans Thr184–Asp205. Positions Gly206–Gly215 are enriched in gly residues. A compositionally biased stretch (low complexity) spans Asp238–Gln252.

Belongs to the cuticular collagen family. Collagen polypeptide chains are complexed within the cuticle by disulfide bonds and other types of covalent cross-links.

The protein localises to the nucleus. Its function is as follows. Probable cuticular collagen-like protein. Nematode cuticles are composed largely of collagen-like proteins. The cuticle functions both as an exoskeleton and as a barrier to protect the worm from its environment. Acts downstream of the Wnt signaling pathway, perhaps in the formation of the adult cuticle. The chain is Cuticle collagen 38 from Caenorhabditis elegans.